A 209-amino-acid chain; its full sequence is Thymidylate kinase (209 aa).

13–20 (GLEGAGKS) contacts ATP.

The protein belongs to the thymidylate kinase family.

It carries out the reaction dTMP + ATP = dTDP + ADP. Functionally, phosphorylation of dTMP to form dTDP in both de novo and salvage pathways of dTTP synthesis. In Shewanella sp. (strain MR-4), this protein is Thymidylate kinase.